A 334-amino-acid polypeptide reads, in one-letter code: tRNA-cytidine(32) 2-sulfurtransferase (334 aa).

Positions 74–79 (SGGKDS) match the PP-loop motif motif. [4Fe-4S] cluster is bound by residues Cys149, Cys152, and Cys240.

Belongs to the TtcA family. As to quaternary structure, homodimer. The cofactor is Mg(2+). It depends on [4Fe-4S] cluster as a cofactor.

It is found in the cytoplasm. It catalyses the reaction cytidine(32) in tRNA + S-sulfanyl-L-cysteinyl-[cysteine desulfurase] + AH2 + ATP = 2-thiocytidine(32) in tRNA + L-cysteinyl-[cysteine desulfurase] + A + AMP + diphosphate + H(+). It functions in the pathway tRNA modification. Its function is as follows. Catalyzes the ATP-dependent 2-thiolation of cytidine in position 32 of tRNA, to form 2-thiocytidine (s(2)C32). The sulfur atoms are provided by the cysteine/cysteine desulfurase (IscS) system. In Burkholderia ambifaria (strain ATCC BAA-244 / DSM 16087 / CCUG 44356 / LMG 19182 / AMMD) (Burkholderia cepacia (strain AMMD)), this protein is tRNA-cytidine(32) 2-sulfurtransferase.